Reading from the N-terminus, the 189-residue chain is MKRIVLYGGQFNPIHTAHMIVASEVFHELQPDEFYFLPSFMSPLKKHHDFIDVQHRLTMIQMVIDELGFGDICDDEIKRGGQSYTYDTIKAFKEQHKDSELYFVIGTDQYNQLEKWYQIEYLKEMVTFVVVNRDKNSQNVENGMIAIQIPRVDISSTMIRQRVSKGKSIQVLVPKSVENYIKGEGLYEH.

It belongs to the NadD family.

The enzyme catalyses nicotinate beta-D-ribonucleotide + ATP + H(+) = deamido-NAD(+) + diphosphate. The protein operates within cofactor biosynthesis; NAD(+) biosynthesis; deamido-NAD(+) from nicotinate D-ribonucleotide: step 1/1. In terms of biological role, catalyzes the reversible adenylation of nicotinate mononucleotide (NaMN) to nicotinic acid adenine dinucleotide (NaAD). The polypeptide is Probable nicotinate-nucleotide adenylyltransferase (Staphylococcus aureus (strain MRSA252)).